We begin with the raw amino-acid sequence, 560 residues long: Solute carrier family 49 member A3 (560 aa).

12 helical membrane passes run 30 to 50 (WVFL…WLSF), 70 to 90 (WLSL…IWIL), 100 to 120 (ILGA…CMVV), 125 to 145 (PFAF…LVIF), 166 to 186 (LATM…PVLV), 192 to 212 (IPLM…LSTI), 250 to 270 (VILA…SALL), 282 to 302 (GFSG…ALAL), 318 to 338 (IGLC…QLQG), 341 to 361 (LALA…GPVA), 379 to 399 (GMIF…MTAL), and 422 to 442 (VSLL…AVFF). The segment at 451–540 (AESGEPPSTR…PGRLAGRVQA (90 aa)) is disordered. Residues 466–481 (ADSGPGVDRGGAGRAG) are compositionally biased toward gly residues.

This sequence belongs to the major facilitator superfamily.

The protein resides in the membrane. The chain is Solute carrier family 49 member A3 from Homo sapiens (Human).